A 415-amino-acid polypeptide reads, in one-letter code: MFNRNLTLDQVDPDVWAAIQKEDVRQEQHIELIASENYASPAVMQAQGTQLTNKYAEGYPGKRYYGGCEYVDVVEQLAIDRLKQIFGAEAANVQPNSGSQANQGVYMAVLKPGDTVLGMSLAEGGHLTHGASVNASGKLYNFVPYGLDADEVLDYAQVERLTKEHKPKLIVAGASAYALHIDFERMARIAHDNGALFMVDIAHYAGLVAGGAYPNPVPHADFVTSTTHKSLRGPRGGVIMMKAEVEKAVNSAIFPGIQGGPLMHVIAAKAVAFKEALSPEFQDYAQQVVKNAKVLADTLVKRGLRIVSGRTESHVMLVDLRPKGITGKEAEAVLGQAHITVNKNAIPNDPEKPFVTSGIRLGTPAMTTRGFKEAEAELTANLIADVLDNPRDEANIAAVRARVNELTARLPVYGN.

(6S)-5,6,7,8-tetrahydrofolate contacts are provided by residues Leu-121 and 125-127 (GHL). Lys-229 is modified (N6-(pyridoxal phosphate)lysine).

Belongs to the SHMT family. As to quaternary structure, homodimer. Requires pyridoxal 5'-phosphate as cofactor.

Its subcellular location is the cytoplasm. It carries out the reaction (6R)-5,10-methylene-5,6,7,8-tetrahydrofolate + glycine + H2O = (6S)-5,6,7,8-tetrahydrofolate + L-serine. It participates in one-carbon metabolism; tetrahydrofolate interconversion. It functions in the pathway amino-acid biosynthesis; glycine biosynthesis; glycine from L-serine: step 1/1. Its function is as follows. Catalyzes the reversible interconversion of serine and glycine with tetrahydrofolate (THF) serving as the one-carbon carrier. This reaction serves as the major source of one-carbon groups required for the biosynthesis of purines, thymidylate, methionine, and other important biomolecules. Also exhibits THF-independent aldolase activity toward beta-hydroxyamino acids, producing glycine and aldehydes, via a retro-aldol mechanism. The chain is Serine hydroxymethyltransferase 2 from Bordetella parapertussis (strain 12822 / ATCC BAA-587 / NCTC 13253).